Here is a 232-residue protein sequence, read N- to C-terminus: Rho-related GTP-binding protein Rho6 (232 aa).

GTP is bound by residues 23–28 (QCGKTA), 38–45 (YPETYVPT), 67–71 (DTSGS), 125–128 (CKTD), and 169–170 (AF). Residues 42-50 (YVPTVFENY) carry the Effector region motif. Cys-229 is subject to Cysteine methyl ester. Cys-229 carries the S-geranylgeranyl cysteine lipid modification. A propeptide spans 230-232 (SIM) (removed in mature form).

The protein belongs to the small GTPase superfamily. Rho family. As to quaternary structure, binds GRB7 and PLXNB1. Interacts with PLXNA2. Interacts with UBXD5.

It is found in the cell membrane. It localises to the cytoplasm. Its subcellular location is the cytoskeleton. Lacks intrinsic GTPase activity. Has a low affinity for GDP, and constitutively binds GTP. Controls rearrangements of the actin cytoskeleton. Induces the Rac-dependent neuritic process formation in part by disruption of the cortical actin filaments. Causes the formation of many neuritic processes from the cell body with disruption of the cortical actin filaments. The sequence is that of Rho-related GTP-binding protein Rho6 (Rnd1) from Mus musculus (Mouse).